Consider the following 260-residue polypeptide: Ditrans,polycis-undecaprenyl-diphosphate synthase ((2E,6E)-farnesyl-diphosphate specific) (260 aa).

The active site involves Asp-20. Mg(2+) is bound at residue Asp-20. Substrate-binding positions include 21–24, Trp-25, Arg-33, His-37, and 65–67; these read GNGR and SSE. Asn-68 (proton acceptor) is an active-site residue. Residues Trp-69, Arg-71, and Arg-188 each contribute to the substrate site. His-193 is a binding site for Mg(2+). 194-196 lines the substrate pocket; sequence RIS. Residue Glu-207 participates in Mg(2+) binding.

It belongs to the UPP synthase family. Homodimer. Requires Mg(2+) as cofactor.

It catalyses the reaction 8 isopentenyl diphosphate + (2E,6E)-farnesyl diphosphate = di-trans,octa-cis-undecaprenyl diphosphate + 8 diphosphate. In terms of biological role, catalyzes the sequential condensation of isopentenyl diphosphate (IPP) with (2E,6E)-farnesyl diphosphate (E,E-FPP) to yield (2Z,6Z,10Z,14Z,18Z,22Z,26Z,30Z,34E,38E)-undecaprenyl diphosphate (di-trans,octa-cis-UPP). UPP is the precursor of glycosyl carrier lipid in the biosynthesis of bacterial cell wall polysaccharide components such as peptidoglycan and lipopolysaccharide. The polypeptide is Ditrans,polycis-undecaprenyl-diphosphate synthase ((2E,6E)-farnesyl-diphosphate specific) (Wigglesworthia glossinidia brevipalpis).